The primary structure comprises 420 residues: Histidine--tRNA ligase (420 aa).

This sequence belongs to the class-II aminoacyl-tRNA synthetase family. As to quaternary structure, homodimer.

It is found in the cytoplasm. The catalysed reaction is tRNA(His) + L-histidine + ATP = L-histidyl-tRNA(His) + AMP + diphosphate + H(+). This chain is Histidine--tRNA ligase, found in Desulforudis audaxviator (strain MP104C).